The following is an 83-amino-acid chain: Cobrotoxin homolog (83 aa).

An N-terminal signal peptide occupies residues 1–21 (METLLLTLLVVTIVCLDLGYT). 4 disulfides stabilise this stretch: Cys-24–Cys-45, Cys-38–Cys-62, Cys-64–Cys-75, and Cys-76–Cys-81.

This sequence belongs to the three-finger toxin family. Short-chain subfamily. Type I alpha-neurotoxin sub-subfamily. In terms of tissue distribution, expressed by the venom gland.

It localises to the secreted. Binds to muscle nicotinic acetylcholine receptor (nAChR) and inhibit acetylcholine from binding to the receptor, thereby impairing neuromuscular transmission. This Naja naja (Indian cobra) protein is Cobrotoxin homolog.